We begin with the raw amino-acid sequence, 611 residues long: DNA mismatch repair protein MutL (611 aa).

This sequence belongs to the DNA mismatch repair MutL/HexB family.

This protein is involved in the repair of mismatches in DNA. It is required for dam-dependent methyl-directed DNA mismatch repair. May act as a 'molecular matchmaker', a protein that promotes the formation of a stable complex between two or more DNA-binding proteins in an ATP-dependent manner without itself being part of a final effector complex. The protein is DNA mismatch repair protein MutL of Borrelia garinii subsp. bavariensis (strain ATCC BAA-2496 / DSM 23469 / PBi) (Borreliella bavariensis).